The chain runs to 336 residues: Holliday junction branch migration complex subunit RuvB (336 aa).

A large ATPase domain (RuvB-L) region spans residues 1–182 (MKERIVNLET…FGMSFRMQFY (182 aa)). Residues Leu-21, Arg-22, Gly-63, Lys-66, Thr-67, Ser-68, 129 to 131 (EDF), Arg-172, Tyr-182, and Arg-219 each bind ATP. Position 67 (Thr-67) interacts with Mg(2+). Positions 183–253 (SPSELALIIK…ITLHALNELG (71 aa)) are small ATPAse domain (RuvB-S). The tract at residues 256 to 336 (ELGFDEADLA…IPTLNPQTLF (81 aa)) is head domain (RuvB-H). DNA-binding residues include Arg-310 and Arg-315.

The protein belongs to the RuvB family. In terms of assembly, homohexamer. Forms an RuvA(8)-RuvB(12)-Holliday junction (HJ) complex. HJ DNA is sandwiched between 2 RuvA tetramers; dsDNA enters through RuvA and exits via RuvB. An RuvB hexamer assembles on each DNA strand where it exits the tetramer. Each RuvB hexamer is contacted by two RuvA subunits (via domain III) on 2 adjacent RuvB subunits; this complex drives branch migration. In the full resolvosome a probable DNA-RuvA(4)-RuvB(12)-RuvC(2) complex forms which resolves the HJ.

The protein localises to the cytoplasm. The catalysed reaction is ATP + H2O = ADP + phosphate + H(+). Functionally, the RuvA-RuvB-RuvC complex processes Holliday junction (HJ) DNA during genetic recombination and DNA repair, while the RuvA-RuvB complex plays an important role in the rescue of blocked DNA replication forks via replication fork reversal (RFR). RuvA specifically binds to HJ cruciform DNA, conferring on it an open structure. The RuvB hexamer acts as an ATP-dependent pump, pulling dsDNA into and through the RuvAB complex. RuvB forms 2 homohexamers on either side of HJ DNA bound by 1 or 2 RuvA tetramers; 4 subunits per hexamer contact DNA at a time. Coordinated motions by a converter formed by DNA-disengaged RuvB subunits stimulates ATP hydrolysis and nucleotide exchange. Immobilization of the converter enables RuvB to convert the ATP-contained energy into a lever motion, pulling 2 nucleotides of DNA out of the RuvA tetramer per ATP hydrolyzed, thus driving DNA branch migration. The RuvB motors rotate together with the DNA substrate, which together with the progressing nucleotide cycle form the mechanistic basis for DNA recombination by continuous HJ branch migration. Branch migration allows RuvC to scan DNA until it finds its consensus sequence, where it cleaves and resolves cruciform DNA. The sequence is that of Holliday junction branch migration complex subunit RuvB from Helicobacter pylori (strain Shi470).